The following is a 70-amino-acid chain: uncharacterized protein (70 aa).

It belongs to the opacity porin family.

This is an uncharacterized protein from Haemophilus influenzae (strain ATCC 51907 / DSM 11121 / KW20 / Rd).